The primary structure comprises 314 residues: Lipoyl synthase (314 aa).

Positions 55, 60, 66, 81, 85, 88, and 292 each coordinate [4Fe-4S] cluster. Residues 67–281 (WEDREATFLI…SAYAEGLGFA (215 aa)) enclose the Radical SAM core domain.

Belongs to the radical SAM superfamily. Lipoyl synthase family. It depends on [4Fe-4S] cluster as a cofactor.

It localises to the cytoplasm. It catalyses the reaction [[Fe-S] cluster scaffold protein carrying a second [4Fe-4S](2+) cluster] + N(6)-octanoyl-L-lysyl-[protein] + 2 oxidized [2Fe-2S]-[ferredoxin] + 2 S-adenosyl-L-methionine + 4 H(+) = [[Fe-S] cluster scaffold protein] + N(6)-[(R)-dihydrolipoyl]-L-lysyl-[protein] + 4 Fe(3+) + 2 hydrogen sulfide + 2 5'-deoxyadenosine + 2 L-methionine + 2 reduced [2Fe-2S]-[ferredoxin]. The protein operates within protein modification; protein lipoylation via endogenous pathway; protein N(6)-(lipoyl)lysine from octanoyl-[acyl-carrier-protein]: step 2/2. Functionally, catalyzes the radical-mediated insertion of two sulfur atoms into the C-6 and C-8 positions of the octanoyl moiety bound to the lipoyl domains of lipoate-dependent enzymes, thereby converting the octanoylated domains into lipoylated derivatives. The sequence is that of Lipoyl synthase from Mycolicibacterium smegmatis (strain ATCC 700084 / mc(2)155) (Mycobacterium smegmatis).